Here is a 544-residue protein sequence, read N- to C-terminus: tRNA pseudouridine synthase 1 (544 aa).

2 stretches are compositionally biased toward basic and acidic residues: residues 1–10 (MSEENLRPAY) and 31–61 (RKAD…RLDE). The tract at residues 1–74 (MSEENLRPAY…PLPKEPRLPK (74 aa)) is disordered. The active-site Nucleophile is aspartate 134. The segment at 495–544 (IPGLTDAPESNKKIKQRKRMEEEEAASKKAEISSTTQSNEPEVQPEAAAN) is disordered. Positions 513-525 (RMEEEEAASKKAE) are enriched in basic and acidic residues.

This sequence belongs to the tRNA pseudouridine synthase TruA family. It depends on Zn(2+) as a cofactor.

The protein resides in the nucleus. The enzyme catalyses a uridine in tRNA = a pseudouridine in tRNA. The catalysed reaction is uridine in snRNA = pseudouridine in snRNA. It catalyses the reaction a uridine in mRNA = a pseudouridine in mRNA. In terms of biological role, formation of pseudouridine at positions 27 and 28 in the anticodon stem and loop of transfer RNAs; at positions 34 and 36 of intron-containing precursor tRNA(Ile) and at position 35 in the intron-containing tRNA(Tyr). Catalyzes pseudouridylation at position 44 in U2 snRNA. Also catalyzes pseudouridylation of mRNAs. The protein is tRNA pseudouridine synthase 1 (PUS1) of Saccharomyces cerevisiae (strain ATCC 204508 / S288c) (Baker's yeast).